Here is a 224-residue protein sequence, read N- to C-terminus: MTKTNNFLPLMLDLSGRKIVIFGGGSVGERKAKLFSGCADTLVASLEFSQALQELGTSGQVRLVQLDLLTASDSELRGLISGAFLVIPATSNFELNQKITAIARENDILINQVDTLGSVVIPSVIKRGDLVIGISTLGHSPAVSKYTRKQIEGLVTPEYSDMIRLQDELRSYLKQHVAEQRERKEILWKVLESETVWNGFSESYEKAAERAYAIISSYLVNSNR.

Residues 26–27 (SV) and 47–50 (EFSQ) each bind NAD(+).

Belongs to the precorrin-2 dehydrogenase / sirohydrochlorin ferrochelatase family. Homodimer.

The enzyme catalyses precorrin-2 + NAD(+) = sirohydrochlorin + NADH + 2 H(+). The protein operates within porphyrin-containing compound metabolism; siroheme biosynthesis; sirohydrochlorin from precorrin-2: step 1/1. In terms of biological role, involved in the archaeal biosynthesis of heme. Catalyzes the oxiation of precorrin-2 into sirohydroclorin. This Methanosarcina barkeri (strain Fusaro / DSM 804) protein is Precorrin-2 dehydrogenase.